Here is a 318-residue protein sequence, read N- to C-terminus: Small ribosomal subunit protein mS26 (318 aa).

The segment at 295–318 (IDSKLNPTSNGAGNNGNNNNTTNL) is disordered. Residues 300–318 (NPTSNGAGNNGNNNNTTNL) are compositionally biased toward low complexity.

It belongs to the mitochondrion-specific ribosomal protein mS26 family. Component of the mitochondrial small ribosomal subunit (mt-SSU). Mature yeast 74S mitochondrial ribosomes consist of a small (37S) and a large (54S) subunit. The 37S small subunit contains a 15S ribosomal RNA (15S mt-rRNA) and 34 different proteins. The 54S large subunit contains a 21S rRNA (21S mt-rRNA) and 46 different proteins.

It is found in the mitochondrion. Component of the mitochondrial ribosome (mitoribosome), a dedicated translation machinery responsible for the synthesis of mitochondrial genome-encoded proteins, including at least some of the essential transmembrane subunits of the mitochondrial respiratory chain. The mitoribosomes are attached to the mitochondrial inner membrane and translation products are cotranslationally integrated into the membrane. The polypeptide is Small ribosomal subunit protein mS26 (PET123) (Saccharomyces cerevisiae (strain ATCC 204508 / S288c) (Baker's yeast)).